A 641-amino-acid chain; its full sequence is Macrolide export ATP-binding/permease protein MacB (641 aa).

The ABC transporter domain maps to 2–240 (IKLENIKKSF…LKQNLKEIKP (239 aa)). Residue 38-45 (GQSGSGKS) coordinates ATP. 4 helical membrane passes run 268 to 288 (FLTM…VALA), 516 to 536 (LLIS…VMNI), 565 to 585 (FLIE…GLAY), and 601 to 621 (IFST…GIVF).

This sequence belongs to the ABC transporter superfamily. Macrolide exporter (TC 3.A.1.122) family. Homodimer.

The protein localises to the cell inner membrane. Non-canonical ABC transporter that contains transmembrane domains (TMD), which form a pore in the inner membrane, and an ATP-binding domain (NBD), which is responsible for energy generation. Confers resistance against macrolides. The polypeptide is Macrolide export ATP-binding/permease protein MacB (Campylobacter fetus subsp. fetus (strain 82-40)).